The primary structure comprises 331 residues: Protein C10 (331 aa).

This sequence belongs to the poxviridae C4/C10 protein family.

The sequence is that of Protein C10 from Vaccinia virus (strain Copenhagen) (VACV).